Here is an 81-residue protein sequence, read N- to C-terminus: uncharacterized protein (81 aa).

This is an uncharacterized protein from Bacillus subtilis (strain 168).